The chain runs to 508 residues: Lysine--tRNA ligase (508 aa).

Glutamate 416 and glutamate 423 together coordinate Mg(2+).

The protein belongs to the class-II aminoacyl-tRNA synthetase family. Homodimer. Mg(2+) serves as cofactor.

The protein resides in the cytoplasm. The catalysed reaction is tRNA(Lys) + L-lysine + ATP = L-lysyl-tRNA(Lys) + AMP + diphosphate. The sequence is that of Lysine--tRNA ligase from Prochlorococcus marinus (strain MIT 9313).